The following is a 378-amino-acid chain: Acetylornithine deacetylase (378 aa).

Residue His-76 participates in Zn(2+) binding. Asp-78 is a catalytic residue. Residue Asp-108 coordinates Zn(2+). Glu-140 is a catalytic residue. 3 residues coordinate Zn(2+): Glu-141, Glu-165, and His-351.

Belongs to the peptidase M20A family. ArgE subfamily. Homodimer. Zn(2+) is required as a cofactor. Requires Co(2+) as cofactor. The cofactor is glutathione.

It localises to the cytoplasm. The enzyme catalyses N(2)-acetyl-L-ornithine + H2O = L-ornithine + acetate. Its pathway is amino-acid biosynthesis; L-arginine biosynthesis; L-ornithine from N(2)-acetyl-L-ornithine (linear): step 1/1. Functionally, catalyzes the hydrolysis of the amide bond of N(2)-acetylated L-amino acids. Cleaves the acetyl group from N-acetyl-L-ornithine to form L-ornithine, an intermediate in L-arginine biosynthesis pathway, and a branchpoint in the synthesis of polyamines. This is Acetylornithine deacetylase from Aliivibrio fischeri (strain MJ11) (Vibrio fischeri).